The following is a 423-amino-acid chain: MWEDLKSSDNEVYEILQKELKRQEYGLELIASENYASKSVMEAAGSIFTNKYAEGYPKRRYYGGCEYIDEVETLARDRAKELFNAKFANVQPHSGSQANMGAYLALMKPGDTLMGMSLSHGGHLTHGAPVNFSGMLFNVVSYGVDEETETINYDEVERIAKDAKPKVIVAGGSAYSRIIDFKRFREIADEVGAYLMVDMAHFAGLVAAGIHPNPVEYAHVVTSTTHKTLRGPRGGIILTNDSDIYKSINKIIFPGIQGGPLEHIIAAKAVAFKEAMSGEFKEYQKQVVRNSKALSNELASKNLRIVSGGTDTHLFLVDLSELNITGKALEKALGQCDITVNKNTVPKETLSPFVTSGIRIGTPAVTTRGMKEEEMKEIASMIAKVANNVLDEEGNIDKDLAQEIKKDVVSLCQRFPMYADLIE.

(6S)-5,6,7,8-tetrahydrofolate contacts are provided by residues Leu-118 and 122 to 124; that span reads GHL. Lys-227 carries the N6-(pyridoxal phosphate)lysine modification. 351-353 contributes to the (6S)-5,6,7,8-tetrahydrofolate binding site; it reads SPF.

The protein belongs to the SHMT family. In terms of assembly, homodimer. The cofactor is pyridoxal 5'-phosphate.

Its subcellular location is the cytoplasm. It carries out the reaction (6R)-5,10-methylene-5,6,7,8-tetrahydrofolate + glycine + H2O = (6S)-5,6,7,8-tetrahydrofolate + L-serine. The protein operates within one-carbon metabolism; tetrahydrofolate interconversion. It participates in amino-acid biosynthesis; glycine biosynthesis; glycine from L-serine: step 1/1. Catalyzes the reversible interconversion of serine and glycine with tetrahydrofolate (THF) serving as the one-carbon carrier. This reaction serves as the major source of one-carbon groups required for the biosynthesis of purines, thymidylate, methionine, and other important biomolecules. Also exhibits THF-independent aldolase activity toward beta-hydroxyamino acids, producing glycine and aldehydes, via a retro-aldol mechanism. The chain is Serine hydroxymethyltransferase from Petrotoga mobilis (strain DSM 10674 / SJ95).